We begin with the raw amino-acid sequence, 130 residues long: RxLR effector protein PITG_14783 (130 aa).

An N-terminal signal peptide occupies residues 1–20; sequence MRLPYVFAATMATLLVSSNA. The interval 27–58 is disordered; the sequence is AMLSSPNEQHQRQLRSHQTPVEDQEPDEERSL. Positions 38-56 match the RxLR-dEER motif; that stretch reads RQLRSHQTPVEDQEPDEER.

Belongs to the RxLR effector family.

The protein resides in the secreted. Its subcellular location is the host nucleus. It is found in the host cytoplasm. Functionally, effector that enhances P.infestans colonization of Nicotiana benthamiana leaves. The chain is RxLR effector protein PITG_14783 from Phytophthora infestans (strain T30-4) (Potato late blight agent).